The primary structure comprises 439 residues: Ribulose bisphosphate carboxylase/oxygenase activase 2, chloroplastic (439 aa).

A chloroplast-targeting transit peptide spans 1 to 58 (MATSVSTIGAANKAPLSLNNSVAGTSVPSTAFFGKTLKKVYGKGVSSPKVTNRSLRIA). 169–176 (GGKGQGKS) serves as a coordination point for ATP.

This sequence belongs to the RuBisCO activase family.

Its subcellular location is the plastid. It localises to the chloroplast stroma. Activation of RuBisCO (ribulose-1,5-bisphosphate carboxylase/oxygenase; EC 4.1.1.39) involves the ATP-dependent carboxylation of the epsilon-amino group of lysine leading to a carbamate structure. The chain is Ribulose bisphosphate carboxylase/oxygenase activase 2, chloroplastic (RCA) from Nicotiana tabacum (Common tobacco).